The chain runs to 544 residues: Chaperonin GroEL (544 aa).

Residues 30–33 (TLGP), Lys-51, 87–91 (DGTTT), Gly-415, and Asp-495 contribute to the ATP site.

This sequence belongs to the chaperonin (HSP60) family. In terms of assembly, forms a cylinder of 14 subunits composed of two heptameric rings stacked back-to-back. Interacts with the co-chaperonin GroES.

The protein localises to the cytoplasm. The catalysed reaction is ATP + H2O + a folded polypeptide = ADP + phosphate + an unfolded polypeptide.. Its function is as follows. Together with its co-chaperonin GroES, plays an essential role in assisting protein folding. The GroEL-GroES system forms a nano-cage that allows encapsulation of the non-native substrate proteins and provides a physical environment optimized to promote and accelerate protein folding. The chain is Chaperonin GroEL from Neisseria flavescens.